A 133-amino-acid chain; its full sequence is Small ribosomal subunit protein uS19 (133 aa).

The protein belongs to the universal ribosomal protein uS19 family.

Protein S19 forms a complex with S13 that binds strongly to the 16S ribosomal RNA. This is Small ribosomal subunit protein uS19 from Thermococcus onnurineus (strain NA1).